Here is a 402-residue protein sequence, read N- to C-terminus: uncharacterized protein (402 aa).

The next 11 membrane-spanning stretches (helical) occupy residues 12-32, 48-68, 80-100, 101-121, 134-154, 168-188, 212-232, 248-268, 291-311, 339-359, and 367-387; these read FWLITGIIFIAFNLRPAITSV, GAAGFLTALPLLSFAVLSPLA, TLWLGLVILLIGVLTRSTGYT, AALFFGTALIGVGIAIGNVLL, GIMISLYTTSMNIFAALASGV, QAFLLWGGLALLALLIWIPQL, WYVTIFMGLQSFLFYSSIAWF, WMVSLMQFASLPSTFLTPVLA, GLLAGGSHTLLAIWMIIIGIG, MSQSFGYLLAAVGPIFVGYLF, and MPIVLLIAALIVMGAAGQGAG.

It belongs to the major facilitator superfamily. Cyanate porter (TC 2.A.1.17) family.

It is found in the cell membrane. This is an uncharacterized protein from Bacillus subtilis (strain 168).